Reading from the N-terminus, the 354-residue chain is Protein sex-lethal (354 aa).

Residues 1–20 are disordered; that stretch reads MYGNNNPGSNNNNGGYPPYG. 2 RRM domains span residues 127–205 and 213–293; these read TNLI…YARP and TNLY…LAQE.

As to quaternary structure, part of a complex containing fl(2)d, Sxl and vir. Interacts with nito. Interacts with Unr; cooperates with Sxl to prevent translation of msl-2 transcripts. Interacts with how; promoting nuclear retention of msl-2 transcripts. The embryo-specific isoform is not expressed in the pole cells, which are the progenitors of the germline.

It localises to the nucleus. The protein resides in the cytoplasm. Its function is as follows. Sex determination switch protein, which controls sexual development and dosage compensation in females. Sxl protein is only active in females: it is inactive in males throughout development. Acts as a mRNA-binding protein, which specifically binds to a subset of pre-mRNAs and mRNAs and regulates their processing and/or translation. Promotes sexual development by controlling the female-specific alternative splicing of the transformer (tra) pre-mRNA: binds tightly to a characteristic uridine-rich polypyrimidine tract at the non-sex specific 3' splice site in one of the tra introns, preventing the general splicing factor U2AF from binding to this site and forcing it to bind to the female-specific 3' splice site. Acts as an inhibitor of dosage compensation in females by preventing production of msl-2 protein, an essential component of the MSL complex, the complex that mediates X-chromosome dosage compensation. Specifially binds to uridine stretches in both the 5'- and 3'-UTR of msl-2 transcripts. Sxl first acts at the splicing level by promoting retention of an intron in the 5' UTR of msl-2 pre-mRNA. The retained intron contains Sxl-binding sites that are required for subsequent steps of repression: after msl-2 mRNA export into the cytoplasm, Sxl coordinates its translational repression by targeting early steps of translation initiation. Together with how, Sxl also prevents production of msl-2 protein by preventing nuclear export of msl-2 transcripts. In Drosophila subobscura (Fruit fly), this protein is Protein sex-lethal.